The sequence spans 675 residues: Transketolase, chloroplastic (675 aa).

Thiamine diphosphate is bound by residues His78 and Gly127–Leu129. Asp168 provides a ligand contact to Mg(2+). Positions 169, 173, and 198 each coordinate thiamine diphosphate. Asn198 and Ile200 together coordinate Mg(2+). His275 lines the thiamine diphosphate pocket. His275, Arg369, and Ser396 together coordinate substrate. Thiamine diphosphate contacts are provided by residues Glu423 and Phe450 to Tyr453. The Proton donor role is filled by Glu423. Substrate is bound by residues His474, Asp482, and Arg533.

As to quaternary structure, homodimer. Mg(2+) is required as a cofactor. Ca(2+) serves as cofactor. The cofactor is Mn(2+). Requires Co(2+) as cofactor. It depends on thiamine diphosphate as a cofactor.

Its subcellular location is the plastid. The protein resides in the chloroplast thylakoid membrane. It catalyses the reaction D-sedoheptulose 7-phosphate + D-glyceraldehyde 3-phosphate = aldehydo-D-ribose 5-phosphate + D-xylulose 5-phosphate. It participates in carbohydrate biosynthesis; Calvin cycle. Functionally, catalyzes the reversible transfer of a two-carbon ketol group from fructose-6-phosphate or sedoheptulose-7-phosphate to glyceraldehyde-3-phosphate to yield xylulose-5-phosphate and erythrose-4-phosphate or ribose-5-phosphate, respectively. This is Transketolase, chloroplastic from Zea mays (Maize).